Consider the following 259-residue polypeptide: MAVGKNKRISKGKKGGKKKASDPFAKKDWYDIKAPTMFTVRNVGKTLVTRTQGTKIASEALKGRVFEVSLADLQKNEDDAFRKMRLRVEDVQGRNCLTNFWGMDFTTDKLRSLVRKWQTLIEAHVDVKTTDGYTLRVFCISFTKKRQGQIKRTCYAQSAQIRQIRKKMMEIITREATSCDLKELVAKFIPESIGKDIEKSCQGIYPLQNTFIRKVKVLKAPKFDITKLMEVHGDYSEEVGAKIERPAAAAPAVEEAATA.

Over residues 1–18 (MAVGKNKRISKGKKGGKK) the composition is skewed to basic residues. Residues 1-22 (MAVGKNKRISKGKKGGKKKASD) form a disordered region.

This sequence belongs to the eukaryotic ribosomal protein eS1 family. As to quaternary structure, component of the small ribosomal subunit. Mature ribosomes consist of a small (40S) and a large (60S) subunit. The 40S subunit contains about 33 different proteins and 1 molecule of RNA (18S). The 60S subunit contains about 49 different proteins and 3 molecules of RNA (25S, 5.8S and 5S).

Its subcellular location is the cytoplasm. The sequence is that of Small ribosomal subunit protein eS1 from Chlamydomonas reinhardtii (Chlamydomonas smithii).